A 79-amino-acid chain; its full sequence is Acyl carrier protein (79 aa).

The region spanning 2 to 77 (DNIEQRVKKI…LAIDFAKSKA (76 aa)) is the Carrier domain. Residue Ser37 is modified to O-(pantetheine 4'-phosphoryl)serine.

The protein belongs to the acyl carrier protein (ACP) family. Post-translationally, 4'-phosphopantetheine is transferred from CoA to a specific serine of apo-ACP by AcpS. This modification is essential for activity because fatty acids are bound in thioester linkage to the sulfhydryl of the prosthetic group.

It localises to the cytoplasm. It functions in the pathway lipid metabolism; fatty acid biosynthesis. Functionally, carrier of the growing fatty acid chain in fatty acid biosynthesis. The polypeptide is Acyl carrier protein (Polynucleobacter necessarius subsp. necessarius (strain STIR1)).